A 351-amino-acid polypeptide reads, in one-letter code: S-adenosylmethionine:tRNA ribosyltransferase-isomerase (351 aa).

Belongs to the QueA family. Monomer.

It localises to the cytoplasm. The catalysed reaction is 7-aminomethyl-7-carbaguanosine(34) in tRNA + S-adenosyl-L-methionine = epoxyqueuosine(34) in tRNA + adenine + L-methionine + 2 H(+). It participates in tRNA modification; tRNA-queuosine biosynthesis. Transfers and isomerizes the ribose moiety from AdoMet to the 7-aminomethyl group of 7-deazaguanine (preQ1-tRNA) to give epoxyqueuosine (oQ-tRNA). This is S-adenosylmethionine:tRNA ribosyltransferase-isomerase from Acinetobacter baumannii (strain SDF).